The sequence spans 574 residues: Arginine--tRNA ligase (574 aa).

The 'HIGH' region signature appears at 124–134; that stretch reads ANPNGPLHIGH.

It belongs to the class-I aminoacyl-tRNA synthetase family.

It is found in the cytoplasm. The enzyme catalyses tRNA(Arg) + L-arginine + ATP = L-arginyl-tRNA(Arg) + AMP + diphosphate. The protein is Arginine--tRNA ligase of Methanococcus aeolicus (strain ATCC BAA-1280 / DSM 17508 / OCM 812 / Nankai-3).